The sequence spans 475 residues: ATP synthase subunit beta (475 aa).

153–160 (GGAGVGKT) lines the ATP pocket.

This sequence belongs to the ATPase alpha/beta chains family. In terms of assembly, F-type ATPases have 2 components, CF(1) - the catalytic core - and CF(0) - the membrane proton channel. CF(1) has five subunits: alpha(3), beta(3), gamma(1), delta(1), epsilon(1). CF(0) has three main subunits: a(1), b(2) and c(9-12). The alpha and beta chains form an alternating ring which encloses part of the gamma chain. CF(1) is attached to CF(0) by a central stalk formed by the gamma and epsilon chains, while a peripheral stalk is formed by the delta and b chains.

It is found in the cell membrane. The catalysed reaction is ATP + H2O + 4 H(+)(in) = ADP + phosphate + 5 H(+)(out). Functionally, produces ATP from ADP in the presence of a proton gradient across the membrane. The catalytic sites are hosted primarily by the beta subunits. In Limosilactobacillus reuteri (strain DSM 20016) (Lactobacillus reuteri), this protein is ATP synthase subunit beta.